Reading from the N-terminus, the 883-residue chain is Putative GTP diphosphokinase RSH1, chloroplastic (883 aa).

Residues 1–55 (MTSASSMSVSVECVNICNLTKGDGNARSDCSALSCAWKAPRALTGFLASTAHPPV) constitute a chloroplast transit peptide. The region spanning 172–279 (FIIHPVAVAR…VKLADRLHNM (108 aa)) is the HD domain. Residues 562 to 625 (LGSRVFVFTP…ENAEVVEIVT (64 aa)) enclose the TGS domain. Residues 710–726 (QSQDKSRDTTPAPQNGS) show a composition bias toward polar residues. The segment at 710–746 (QSQDKSRDTTPAPQNGSVWAPKVNGKHNKAIKNSSSD) is disordered. Positions 796 to 867 (WLCVVSMDRK…LVLGVLGWSS (72 aa)) constitute an ACT domain.

Belongs to the RelA/SpoT family. Interacts with RPP5.

The protein localises to the plastid. The protein resides in the chloroplast. It catalyses the reaction GTP + ATP = guanosine 3'-diphosphate 5'-triphosphate + AMP. May be involved in a rapid plant ppGpp (guanosine 3'-diphosphate 5'-diphosphate)-mediated response to pathogens and other stresses. The chain is Putative GTP diphosphokinase RSH1, chloroplastic (RSH1) from Arabidopsis thaliana (Mouse-ear cress).